A 331-amino-acid polypeptide reads, in one-letter code: Serine/threonine-protein phosphatase 6 catalytic subunit (331 aa).

Mn(2+) is bound by residues D79, H81, D107, and N139. H140 functions as the Proton donor in the catalytic mechanism. Positions 189 and 264 each coordinate Mn(2+).

The protein belongs to the PPP phosphatase family. PP-6 (PP-V) subfamily. Forms a complex composed of catalytic subunit pph-6 and regulatory subunit saps-1; the interaction increases pph-6 and saps-1 protein stability. It depends on Mn(2+) as a cofactor.

The protein localises to the cytoplasm. Its subcellular location is the cell cortex. It localises to the cytoskeleton. It is found in the spindle pole. It carries out the reaction O-phospho-L-seryl-[protein] + H2O = L-seryl-[protein] + phosphate. The catalysed reaction is O-phospho-L-threonyl-[protein] + H2O = L-threonyl-[protein] + phosphate. In terms of biological role, catalytic subunit of protein phosphatase 6 (PP6). In complex with saps-1, promotes actomyosin contractility during cytokinesis by regulating the organization of cortical non-muscle myosin II nmy-2 and thus contributing to correct spindle positioning. Also required for the proper generation of pulling forces on spindle poles during anaphase by regulating the cortical localization of gpr-1, gpr-2 and lin-5. This Caenorhabditis elegans protein is Serine/threonine-protein phosphatase 6 catalytic subunit.